We begin with the raw amino-acid sequence, 327 residues long: Spermidine/putrescine import ATP-binding protein PotA (327 aa).

An ABC transporter domain is found at isoleucine 5–isoleucine 235. Glycine 37–threonine 44 provides a ligand contact to ATP.

This sequence belongs to the ABC transporter superfamily. Spermidine/putrescine importer (TC 3.A.1.11.1) family. As to quaternary structure, the complex is composed of two ATP-binding proteins (PotA), two transmembrane proteins (PotB and PotC) and a solute-binding protein (PotD).

It localises to the cell membrane. It catalyses the reaction ATP + H2O + polyamine-[polyamine-binding protein]Side 1 = ADP + phosphate + polyamineSide 2 + [polyamine-binding protein]Side 1.. Its function is as follows. Part of the ABC transporter complex PotABCD involved in spermidine/putrescine import. Responsible for energy coupling to the transport system. This is Spermidine/putrescine import ATP-binding protein PotA from Bacillus cereus (strain ATCC 14579 / DSM 31 / CCUG 7414 / JCM 2152 / NBRC 15305 / NCIMB 9373 / NCTC 2599 / NRRL B-3711).